A 317-amino-acid polypeptide reads, in one-letter code: Beta-ketoacyl-[acyl-carrier-protein] synthase III (317 aa).

Active-site residues include Cys-112 and His-244. An ACP-binding region spans residues 245–249 (QANLR). The active site involves Asn-274.

This sequence belongs to the thiolase-like superfamily. FabH family. In terms of assembly, homodimer.

Its subcellular location is the cytoplasm. It carries out the reaction malonyl-[ACP] + acetyl-CoA + H(+) = 3-oxobutanoyl-[ACP] + CO2 + CoA. It participates in lipid metabolism; fatty acid biosynthesis. Functionally, catalyzes the condensation reaction of fatty acid synthesis by the addition to an acyl acceptor of two carbons from malonyl-ACP. Catalyzes the first condensation reaction which initiates fatty acid synthesis and may therefore play a role in governing the total rate of fatty acid production. Possesses both acetoacetyl-ACP synthase and acetyl transacylase activities. Its substrate specificity determines the biosynthesis of branched-chain and/or straight-chain of fatty acids. The protein is Beta-ketoacyl-[acyl-carrier-protein] synthase III of Serratia proteamaculans (strain 568).